Here is a 480-residue protein sequence, read N- to C-terminus: Chromosomal replication initiator protein DnaA (480 aa).

Residues 1–71 (MNLTKVWNTT…REQLGSVVGF (71 aa)) form a domain I, interacts with DnaA modulators region. The domain II stretch occupies residues 71–139 (FPVDVRIVLA…LELHRAVRSS (69 aa)). The interval 91–115 (SINGRHAARDTRKSDHHAPLSGGYG) is disordered. The segment covering 97-108 (AARDTRKSDHHA) has biased composition (basic and acidic residues). A domain III, AAA+ region region spans residues 140–356 (MLNPRYTFDR…GCLNRVTAYA (217 aa)). ATP is bound by residues Gly-184, Gly-186, Lys-187, and Thr-188. The segment at 357–480 (QMYNIPVTIE…IRERLMNSAV (124 aa)) is domain IV, binds dsDNA.

The protein belongs to the DnaA family. Oligomerizes as a right-handed, spiral filament on DNA at oriC.

It localises to the cytoplasm. Its function is as follows. Plays an essential role in the initiation and regulation of chromosomal replication. ATP-DnaA binds to the origin of replication (oriC) to initiate formation of the DNA replication initiation complex once per cell cycle. Binds the DnaA box (a 9 base pair repeat at the origin) and separates the double-stranded (ds)DNA. Forms a right-handed helical filament on oriC DNA; dsDNA binds to the exterior of the filament while single-stranded (ss)DNA is stabiized in the filament's interior. The ATP-DnaA-oriC complex binds and stabilizes one strand of the AT-rich DNA unwinding element (DUE), permitting loading of DNA polymerase. After initiation quickly degrades to an ADP-DnaA complex that is not apt for DNA replication. Binds acidic phospholipids. This chain is Chromosomal replication initiator protein DnaA, found in Roseiflexus castenholzii (strain DSM 13941 / HLO8).